Reading from the N-terminus, the 361-residue chain is Homeobox protein knotted-1-like 6 (361 aa).

The interval 11–48 (VGASGVHGGHQHQHHHHPWGSSLSAIVAPPPPPQLQQQ) is disordered. Over residues 19–28 (GHQHQHHHHP) the composition is skewed to basic residues. Residues 242-262 (ELKHHLLKKYSGYLSSLKQEL) form the ELK domain. A DNA-binding region (homeobox; TALE-type) is located at residues 263-326 (SKKKKKGKLP…NQRKRHWKPS (64 aa)).

Belongs to the TALE/KNOX homeobox family. In terms of assembly, interacts with FTIP7. As to expression, expressed predominantly in shoot apices. Also found to a lesser extent in glumes.

It localises to the nucleus. The protein localises to the cytoplasm. Functionally, transcription factor that regulates genes involved in development. May be involved in shoot formation during embryogenesis. Overexpression in transgenic plants causes altered leaf morphology. Regulates anther dehiscence via direct repression of the auxin biosynthetic gene YUCCA4. Binds to the DNA sequence 5'-TGAC-3' in the promoter of the YUCCA4 gene and represses its activity during anther development. Reduction of auxin levels at late stage of anther development, after meiosis of microspore mother cells, is necessary for normal anther dehiscence and seed setting. The chain is Homeobox protein knotted-1-like 6 (OSH1) from Oryza sativa subsp. japonica (Rice).